Here is a 543-residue protein sequence, read N- to C-terminus: Mannuronan C5-epimerase (543 aa).

An N-terminal signal peptide occupies residues 1–35 (MPDISLSIPRRRLPRLRPLAAAVLGAVLLHGQAWA). 7 PbH1 repeats span residues 243–270 (GAEV…SISQ), 283–304 (RPKG…YCYE), 305–327 (ADDL…DPHD), 329–352 (SHRL…IVSR), 354–376 (VNDS…VLDR), 378–400 (SEGN…TLYE), and 401–423 (SGDN…RVRN). Residue His326 is the Proton acceptor of the active site.

It belongs to the D-mannuronate C5-epimerase family.

It localises to the periplasm. The catalysed reaction is [(1-&gt;4)-beta-D-mannuronosyl](n) = [alginate](n). It functions in the pathway glycan biosynthesis; alginate biosynthesis. Inhibited by the presence of acetyl groups on the substrate. Its function is as follows. Catalyzes the epimerization of beta-D-mannuronate to alpha-L-guluronate during the synthesis of the linear polysaccharide alginate. In addition, is part of a periplasmic protein complex that protects alginate from degradation by AlgL by channeling the newly formed alginate polymer through a scaffold that transfers the alginate polymer through the periplasmic space to the outer membrane secretin AlgE. The protein is Mannuronan C5-epimerase of Pseudomonas aeruginosa (strain ATCC 15692 / DSM 22644 / CIP 104116 / JCM 14847 / LMG 12228 / 1C / PRS 101 / PAO1).